Consider the following 351-residue polypeptide: Nicotinate-nucleotide--dimethylbenzimidazole phosphoribosyltransferase (351 aa).

Glu-317 serves as the catalytic Proton acceptor.

This sequence belongs to the CobT family.

It catalyses the reaction 5,6-dimethylbenzimidazole + nicotinate beta-D-ribonucleotide = alpha-ribazole 5'-phosphate + nicotinate + H(+). Its pathway is nucleoside biosynthesis; alpha-ribazole biosynthesis; alpha-ribazole from 5,6-dimethylbenzimidazole: step 1/2. Its function is as follows. Catalyzes the synthesis of alpha-ribazole-5'-phosphate from nicotinate mononucleotide (NAMN) and 5,6-dimethylbenzimidazole (DMB). This Pseudomonas putida (strain W619) protein is Nicotinate-nucleotide--dimethylbenzimidazole phosphoribosyltransferase.